The chain runs to 621 residues: Chaperone protein dnaK (621 aa).

Residues 597-621 form a disordered region; that stretch reads VYSSTQQDNSKTEDGSVIDTNSKEA.

The protein belongs to the heat shock protein 70 family.

It is found in the plastid. The protein resides in the chloroplast. Functionally, acts as a chaperone. The chain is Chaperone protein dnaK from Gracilaria tenuistipitata var. liui (Red alga).